A 781-amino-acid polypeptide reads, in one-letter code: uncharacterized protein (781 aa).

2 disordered regions span residues 1-27 (MKKD…ELDD) and 56-268 (NLHI…SDVH). A compositionally biased stretch (acidic residues) spans 11–27 (ESLEEYDEENYTSELDD). Over residues 57–73 (LHIDEKSKGNIHDDTNK) the composition is skewed to basic and acidic residues. Positions 80–94 (KRKGKLNNKKLKLKK) are enriched in basic residues. Residues 99 to 116 (SDEEEENDKNDKNDDDQY) are compositionally biased toward acidic residues. Basic and acidic residues-rich tracts occupy residues 123-144 (DEDR…KGDN), 170-188 (EKNH…HVSV), 216-227 (KTSKKNKNDKTN), and 251-268 (DDYH…SDVH). Residues 616 to 655 (NDTYTLSKLNNQINELTKKINILRGNLDKARKNHAAMKSN) are a coiled coil.

This is an uncharacterized protein from Plasmodium falciparum (isolate 3D7).